Consider the following 184-residue polypeptide: Ribosome-recycling factor (184 aa).

This sequence belongs to the RRF family.

Its subcellular location is the cytoplasm. Its function is as follows. Responsible for the release of ribosomes from messenger RNA at the termination of protein biosynthesis. May increase the efficiency of translation by recycling ribosomes from one round of translation to another. The sequence is that of Ribosome-recycling factor from Onion yellows phytoplasma (strain OY-M).